Here is a 286-residue protein sequence, read N- to C-terminus: MANAKEIKTKIASVKNTQKITSAMEMVAASKMRRAQDRMAASRPYAENMRKVIGHVAQGSLEYKHPYLEVREAKRVGYIVVSTDRGLCGGLNVNLFKKVIADVKKQREAGAEVEFCTIGARSAQFFNSFGGQVSASASGLGDAPKLVDLIGTVRVMLEAYNEGKLDRLYVVFNKFVNTMAQTPVIEQLLPLPKSEEGEFTHQWDYIYEPDPKLLLDTLLVRFVESQVYQGVVENIASEQAARMVAMKAATDNAGELIDDLQLVYNKARQAAITQELSEIVAGAAAV.

The protein belongs to the ATPase gamma chain family. F-type ATPases have 2 components, CF(1) - the catalytic core - and CF(0) - the membrane proton channel. CF(1) has five subunits: alpha(3), beta(3), gamma(1), delta(1), epsilon(1). CF(0) has three main subunits: a, b and c.

The protein resides in the cell inner membrane. Its function is as follows. Produces ATP from ADP in the presence of a proton gradient across the membrane. The gamma chain is believed to be important in regulating ATPase activity and the flow of protons through the CF(0) complex. The sequence is that of ATP synthase gamma chain from Shewanella halifaxensis (strain HAW-EB4).